A 716-amino-acid polypeptide reads, in one-letter code: MRKIIPINNNWYFKADYEEGYEKVDDLRSFENVNLPHTNIELPYNYFDEKMYQIKSCYKYPLHISEKYRDKVIYIHFEGVMAYAQVYLNGLYIGEHKGGYTPFDIRIDEVYDWKKELNMLTVVVDSTERSDIPPKGGQIDYLTYGGIYREVSLGIYDDVFIKNIKVETHGIYDNEKSLNLIVHLENLNHQSGNVKFKVKINDKNGKEVFYKEFNTYLDAVKDVYSFNIENLKDIKLWDVDNPNLYEIKVGMKINNFSDEYDNKFGFREAVFKPDGFYLNGRKLKLRGLNRHQSYPYVGYAMPRRVQEKDAEILKNELHLNIVRTSHYPQSKHFLNKCDELGLLVFEEIPGWQYIGNSEWKKVAEQNLREMITRDWNHPSIILWGVRINESQDDDAFYKNMNKIAHEIDPTRQTGGVRYITNSSFLEDVYTFNDFIHDGINKPLRKQQEVTGLEHNVPYLVTEYNGHMYPTKRFDNEERQMEHCLRHLRIQNASYLDDSISGAIGWCAFDYNTHKDFGSGDRICYHGVMDMFRLPKFASYVYKSQVSPDIEPILEPVTFWARGERSIGGVIPLIIFTNCDYIELQYGNKTKIDNIYPNRDAYKGIPYPPIIIDYDIVKPEMIGAWGMVWEDLTLKGFYKGNKVIERKFSREPIPTYLYVVPDDTILSATQKDATRIVVKILDQYGNLLPFINEVIKIEIEGPAKLQGPNEVALIGGA.

Catalysis depends on Glu389, which acts as the Proton donor. Glu462 functions as the Nucleophile in the catalytic mechanism.

Belongs to the glycosyl hydrolase 2 family. In terms of assembly, homodimer.

The catalysed reaction is Hydrolysis of terminal non-reducing beta-D-galactose residues in beta-D-galactosides.. In terms of biological role, displays beta-galactosidase activity with the artificial chromogenic substrate o-nitrophenyl-beta-D-galactopyranoside (ONPG). The chain is Beta-galactosidase from Thermoanaerobacterium thermosulfurigenes (Clostridium thermosulfurogenes).